Consider the following 160-residue polypeptide: Transcription elongation factor GreA (160 aa).

Residues 43–76 (LSENAEYDAAREQQRQLENKIGDLESKLTRATIL) adopt a coiled-coil conformation.

This sequence belongs to the GreA/GreB family.

Its function is as follows. Necessary for efficient RNA polymerase transcription elongation past template-encoded arresting sites. The arresting sites in DNA have the property of trapping a certain fraction of elongating RNA polymerases that pass through, resulting in locked ternary complexes. Cleavage of the nascent transcript by cleavage factors such as GreA or GreB allows the resumption of elongation from the new 3'terminus. GreA releases sequences of 2 to 3 nucleotides. This Chlorobium phaeobacteroides (strain BS1) protein is Transcription elongation factor GreA.